Reading from the N-terminus, the 353-residue chain is Type 2 DNA topoisomerase 6 subunit A (353 aa).

Residues 2–138 enclose the Topo IIA-type catalytic domain; sequence NRREIAINKL…LGLMPEEDGA (137 aa). Tyr96 (O-(5'-phospho-DNA)-tyrosine intermediate) is an active-site residue. Positions 186 and 238 each coordinate Mg(2+).

It belongs to the TOP6A family. Homodimer. Heterotetramer of two Top6A and two Top6B chains. Mg(2+) serves as cofactor.

The enzyme catalyses ATP-dependent breakage, passage and rejoining of double-stranded DNA.. Functionally, relaxes both positive and negative superturns and exhibits a strong decatenase activity. This is Type 2 DNA topoisomerase 6 subunit A from Methanothermobacter thermautotrophicus (strain ATCC 29096 / DSM 1053 / JCM 10044 / NBRC 100330 / Delta H) (Methanobacterium thermoautotrophicum).